The following is an 825-amino-acid chain: Leucine-rich repeat and guanylate kinase domain-containing protein (825 aa).

The segment at 73 to 96 is disordered; the sequence is DSDGDEDQGEGEAGSEESSESEML. 9 LRR repeats span residues 129 to 149, 150 to 171, 172 to 193, 194 to 215, 216 to 237, 238 to 259, 260 to 280, 281 to 302, and 303 to 324; these read YLNL…CGYV, HLQK…SCMP, YLLE…KPPK, NLKK…SAYH, ALTK…EMCN, NLIH…NKLP, IKIL…EDLK, ALQN…ENHD, and LLEV…EYIK. Residues 337–375 enclose the LRRCT domain; it reads NPIQEKSEYWFFVIFMLLRLTELDQKKIKVEEKVSAVNK. The Guanylate kinase-like domain occupies 414–597; it reads YPMLILAGPE…AYQKLSQLIR (184 aa). 421–428 is a binding site for ATP; the sequence is GPEACGKR. The tract at residues 760–825 is disordered; that stretch reads PEGSISSHLG…TLPPIPQGRR (66 aa). The span at 763–774 shows a compositional bias: polar residues; the sequence is SISSHLGSGASD. Over residues 816-825 the composition is skewed to pro residues; that stretch reads TLPPIPQGRR.

In terms of assembly, interacts (via guanylate kinase-like domain) with RIMBP3 (via coiled-coil region). Interacts (via guanylate kinase-like domain) with HOOK2. Interacts (via LRRCT domain) with KLC3. Interacts with HOOK1 and HOOK3.

The protein resides in the cytoplasmic vesicle. It localises to the secretory vesicle. Its subcellular location is the acrosome. The protein localises to the cytoplasm. It is found in the cytoskeleton. The protein resides in the cilium basal body. Involved in multiple aspects of sperm assembly including acrosome attachment, shaping of the sperm head and in the early aspects of axoneme development. Not essential for primary cilium biogenesis. The sequence is that of Leucine-rich repeat and guanylate kinase domain-containing protein (LRGUK) from Homo sapiens (Human).